A 345-amino-acid chain; its full sequence is 3-isopropylmalate dehydrogenase (345 aa).

74–87 serves as a coordination point for NAD(+); the sequence is GPKWDGLPRKIRPE. Substrate is bound by residues R94, R104, R132, and D217. D217, D241, and D245 together coordinate Mg(2+). 274–286 provides a ligand contact to NAD(+); sequence GSAPDIAGKGLAN.

Belongs to the isocitrate and isopropylmalate dehydrogenases family. LeuB type 1 subfamily. In terms of assembly, homodimer. Requires Mg(2+) as cofactor. The cofactor is Mn(2+).

Its subcellular location is the cytoplasm. It carries out the reaction (2R,3S)-3-isopropylmalate + NAD(+) = 4-methyl-2-oxopentanoate + CO2 + NADH. The protein operates within amino-acid biosynthesis; L-leucine biosynthesis; L-leucine from 3-methyl-2-oxobutanoate: step 3/4. In terms of biological role, catalyzes the oxidation of 3-carboxy-2-hydroxy-4-methylpentanoate (3-isopropylmalate) to 3-carboxy-4-methyl-2-oxopentanoate. The product decarboxylates to 4-methyl-2 oxopentanoate. In Thermus thermophilus (strain ATCC BAA-163 / DSM 7039 / HB27), this protein is 3-isopropylmalate dehydrogenase (leuB).